Reading from the N-terminus, the 388-residue chain is S-adenosylmethionine synthase (388 aa).

His17 contributes to the ATP binding site. Residue Asp19 participates in Mg(2+) binding. Residue Glu45 participates in K(+) binding. Residues Glu58 and Gln106 each contribute to the L-methionine site. The interval 106–116 is flexible loop; it reads QSAHISQGVDR. ATP is bound by residues 166 to 168, Asp241, 247 to 248, Ala264, and Lys268; these read DAK and RK. Residue Asp241 participates in L-methionine binding. Lys272 is a binding site for L-methionine.

The protein belongs to the AdoMet synthase family. In terms of assembly, homotetramer; dimer of dimers. Mg(2+) is required as a cofactor. The cofactor is K(+).

Its subcellular location is the cytoplasm. The enzyme catalyses L-methionine + ATP + H2O = S-adenosyl-L-methionine + phosphate + diphosphate. Its pathway is amino-acid biosynthesis; S-adenosyl-L-methionine biosynthesis; S-adenosyl-L-methionine from L-methionine: step 1/1. Functionally, catalyzes the formation of S-adenosylmethionine (AdoMet) from methionine and ATP. The overall synthetic reaction is composed of two sequential steps, AdoMet formation and the subsequent tripolyphosphate hydrolysis which occurs prior to release of AdoMet from the enzyme. The sequence is that of S-adenosylmethionine synthase from Paracoccus denitrificans (strain Pd 1222).